The sequence spans 265 residues: Hydroxyethylthiazole kinase (265 aa).

Residue M41 coordinates substrate. R117 and S163 together coordinate ATP. A substrate-binding site is contributed by G190.

The protein belongs to the Thz kinase family. Requires Mg(2+) as cofactor.

It carries out the reaction 5-(2-hydroxyethyl)-4-methylthiazole + ATP = 4-methyl-5-(2-phosphooxyethyl)-thiazole + ADP + H(+). The protein operates within cofactor biosynthesis; thiamine diphosphate biosynthesis; 4-methyl-5-(2-phosphoethyl)-thiazole from 5-(2-hydroxyethyl)-4-methylthiazole: step 1/1. Functionally, catalyzes the phosphorylation of the hydroxyl group of 4-methyl-5-beta-hydroxyethylthiazole (THZ). The polypeptide is Hydroxyethylthiazole kinase (Pediococcus pentosaceus (strain ATCC 25745 / CCUG 21536 / LMG 10740 / 183-1w)).